We begin with the raw amino-acid sequence, 194 residues long: Fibroblast growth factor 7 (194 aa).

Positions 1-31 (MRKWILTRILPTPLYRPCFHLVCLVGTISLA) are cleaved as a signal peptide. Asparagine 45 and asparagine 149 each carry an N-linked (GlcNAc...) asparagine glycan.

Belongs to the heparin-binding growth factors family. As to quaternary structure, interacts with FGFBP1. Interacts with FGFR2. Affinity between fibroblast growth factors (FGFs) and their receptors is increased by heparan sulfate glycosaminoglycans that function as coreceptors.

In terms of biological role, growth factor active on keratinocytes. Possible major paracrine effector of normal epithelial cell proliferation. This Rattus norvegicus (Rat) protein is Fibroblast growth factor 7 (Fgf7).